The following is a 347-amino-acid chain: S-adenosylmethionine:tRNA ribosyltransferase-isomerase (347 aa).

Belongs to the QueA family. In terms of assembly, monomer.

Its subcellular location is the cytoplasm. It carries out the reaction 7-aminomethyl-7-carbaguanosine(34) in tRNA + S-adenosyl-L-methionine = epoxyqueuosine(34) in tRNA + adenine + L-methionine + 2 H(+). It functions in the pathway tRNA modification; tRNA-queuosine biosynthesis. Transfers and isomerizes the ribose moiety from AdoMet to the 7-aminomethyl group of 7-deazaguanine (preQ1-tRNA) to give epoxyqueuosine (oQ-tRNA). This is S-adenosylmethionine:tRNA ribosyltransferase-isomerase from Treponema denticola (strain ATCC 35405 / DSM 14222 / CIP 103919 / JCM 8153 / KCTC 15104).